A 419-amino-acid polypeptide reads, in one-letter code: Ribosome biogenesis protein NOP53 (419 aa).

2 disordered regions span residues 1–21 (MGIK…KNKR) and 233–283 (KAFE…KIRQ). A compositionally biased stretch (basic and acidic residues) spans 233–261 (KAFEDKGLVSDQDVNHSIDSDDQSEHEQA). Phosphoserine is present on residues Ser242, Ser249, Ser252, and Ser256. Positions 269–283 (KNKRKTRSQRNKIRQ) are enriched in basic residues.

It belongs to the NOP53 family.

It localises to the nucleus. The protein localises to the nucleolus. The protein resides in the nucleoplasm. Functionally, may play a role in ribosome biogenesis. This chain is Ribosome biogenesis protein NOP53, found in Schizosaccharomyces pombe (strain 972 / ATCC 24843) (Fission yeast).